The chain runs to 227 residues: Ornithine decarboxylase antizyme 1 (227 aa).

The interval 20 to 50 is disordered; sequence EGDKPSATVHATRTMPLLSLHSRGGRSSESS. Over residues 36 to 50 the composition is skewed to low complexity; it reads LLSLHSRGGRSSESS.

The protein belongs to the ODC antizyme family. As to quaternary structure, interacts with ODC1 and thereby sterically blocks ODC homodimerization. Forms a ternary complex with PSMB4 and OAZ1 before PSMB4 is incorporated into the 20S proteasome. Interacts with AZIN2; this interaction disrupts the interaction between the antizyme and ODC1. Interacts with FAM171A1.

Functionally, ornithine decarboxylase (ODC) antizyme protein that negatively regulates ODC activity and intracellular polyamine biosynthesis and uptake in response to increased intracellular polyamine levels. Binds to ODC monomers, inhibiting the assembly of the functional ODC homodimer, and targets the monomers for ubiquitin-independent proteolytic destruction by the 26S proteasome. Triggers ODC degradation by inducing the exposure of a cryptic proteasome-interacting surface of ODC. Stabilizes AZIN2 by interfering with its ubiquitination. Also inhibits cellular uptake of polyamines by inactivating the polyamine uptake transporter. SMAD1/OAZ1/PSMB4 complex mediates the degradation of the CREBBP/EP300 repressor SNIP1. Involved in the translocation of AZIN2 from ER-Golgi intermediate compartment (ERGIC) to the cytosol. The sequence is that of Ornithine decarboxylase antizyme 1 (OAZ1) from Bos taurus (Bovine).